The sequence spans 179 residues: Ribosome-recycling factor (179 aa).

This sequence belongs to the RRF family.

The protein resides in the cytoplasm. Responsible for the release of ribosomes from messenger RNA at the termination of protein biosynthesis. May increase the efficiency of translation by recycling ribosomes from one round of translation to another. This Chlamydia muridarum (strain MoPn / Nigg) protein is Ribosome-recycling factor.